The following is a 221-amino-acid chain: MKKAVCIMSGGMDSTLCAVMAKRAGYDVVALHFDYNQRTMKREKRAFDEICERLGVVKKINLDVSFIAQIGGNALTDTSMQIRKDGVSNDVPNTYVPFRNGVFISIAAALAEKEGAQAIYIGVVEEDSSGYPDCKESFIKSINEAINLGTSADFSCEIITPLVNLSKADIVSKSLELNSPIELTWSCYESEDEACGLCDSCRLRLNGFKKANAVDKIPYKK.

8–18 is an ATP binding site; sequence MSGGMDSTLCA. Positions 187, 195, 198, and 201 each coordinate Zn(2+).

The protein belongs to the QueC family. Zn(2+) serves as cofactor.

The catalysed reaction is 7-carboxy-7-deazaguanine + NH4(+) + ATP = 7-cyano-7-deazaguanine + ADP + phosphate + H2O + H(+). It functions in the pathway purine metabolism; 7-cyano-7-deazaguanine biosynthesis. In terms of biological role, catalyzes the ATP-dependent conversion of 7-carboxy-7-deazaguanine (CDG) to 7-cyano-7-deazaguanine (preQ(0)). The polypeptide is 7-cyano-7-deazaguanine synthase (Campylobacter concisus (strain 13826)).